Consider the following 91-residue polypeptide: Small ribosomal subunit protein uS19 (91 aa).

It belongs to the universal ribosomal protein uS19 family.

Its function is as follows. Protein S19 forms a complex with S13 that binds strongly to the 16S ribosomal RNA. This Marinomonas sp. (strain MWYL1) protein is Small ribosomal subunit protein uS19.